A 243-amino-acid chain; its full sequence is LexA repressor (243 aa).

Positions 1-30 (MSDDTGEFTDGSTESPADADGAGRRRAVDN) are disordered. Over residues 21–30 (GAGRRRAVDN) the composition is skewed to basic and acidic residues. Positions 56–76 (IREIGDAVGLTSTSSVAHQLR) form a DNA-binding region, H-T-H motif. Residues Ser-167 and Lys-204 each act as for autocatalytic cleavage activity in the active site.

It belongs to the peptidase S24 family. As to quaternary structure, homodimer.

The enzyme catalyses Hydrolysis of Ala-|-Gly bond in repressor LexA.. Its function is as follows. Represses a number of genes involved in the response to DNA damage (SOS response), including recA and lexA. In the presence of single-stranded DNA, RecA interacts with LexA causing an autocatalytic cleavage which disrupts the DNA-binding part of LexA, leading to derepression of the SOS regulon and eventually DNA repair. This is LexA repressor from Mycolicibacterium smegmatis (strain ATCC 700084 / mc(2)155) (Mycobacterium smegmatis).